The primary structure comprises 649 residues: Golgin subfamily A member 6-like protein 26 (649 aa).

Disordered regions lie at residues 1–94 (MWPQ…HQEA), 300–330 (QEEK…RQEE), 358–440 (EKMH…EMWR), 455–572 (KEKM…REQE), and 584–620 (EQEE…MRRQ). Residues 10 to 23 (HPHLPTHPHLPTHP) show a composition bias toward low complexity. Residues 25–46 (MSKETRQSKLAEAKEQLTDHHP) are compositionally biased toward basic and acidic residues. Composition is skewed to polar residues over residues 47–57 (QTNPSVGTAAS) and 65–77 (NNGT…TSGG). Positions 80–94 (SPEDEQKASHQHQEA) are enriched in basic and acidic residues. A coiled-coil region spans residues 151–644 (LEQALSAVAT…EEKMQEHQEH (494 aa)).

It belongs to the GOLGA6 family.

This chain is Golgin subfamily A member 6-like protein 26 (GOLGA6L26), found in Homo sapiens (Human).